A 375-amino-acid chain; its full sequence is Queuine tRNA-ribosyltransferase (375 aa).

D93 functions as the Proton acceptor in the catalytic mechanism. Substrate-binding positions include 93–97, D147, Q194, and G221; that span reads DSGGY. The segment at 252–258 is RNA binding; sequence GVGKPDD. The active-site Nucleophile is D271. The RNA binding; important for wobble base 34 recognition stretch occupies residues 276 to 280; sequence TRSGR. Positions 309, 311, 314, and 340 each coordinate Zn(2+).

Belongs to the queuine tRNA-ribosyltransferase family. In terms of assembly, homodimer. Within each dimer, one monomer is responsible for RNA recognition and catalysis, while the other monomer binds to the replacement base PreQ1. Zn(2+) is required as a cofactor.

It catalyses the reaction 7-aminomethyl-7-carbaguanine + guanosine(34) in tRNA = 7-aminomethyl-7-carbaguanosine(34) in tRNA + guanine. Its pathway is tRNA modification; tRNA-queuosine biosynthesis. In terms of biological role, catalyzes the base-exchange of a guanine (G) residue with the queuine precursor 7-aminomethyl-7-deazaguanine (PreQ1) at position 34 (anticodon wobble position) in tRNAs with GU(N) anticodons (tRNA-Asp, -Asn, -His and -Tyr). Catalysis occurs through a double-displacement mechanism. The nucleophile active site attacks the C1' of nucleotide 34 to detach the guanine base from the RNA, forming a covalent enzyme-RNA intermediate. The proton acceptor active site deprotonates the incoming PreQ1, allowing a nucleophilic attack on the C1' of the ribose to form the product. After dissociation, two additional enzymatic reactions on the tRNA convert PreQ1 to queuine (Q), resulting in the hypermodified nucleoside queuosine (7-(((4,5-cis-dihydroxy-2-cyclopenten-1-yl)amino)methyl)-7-deazaguanosine). The protein is Queuine tRNA-ribosyltransferase of Sphingopyxis alaskensis (strain DSM 13593 / LMG 18877 / RB2256) (Sphingomonas alaskensis).